The chain runs to 551 residues: Oleuropein beta-glucosidase (551 aa).

Residues 1-27 (MDIQSNVLTITSGSTPTDTSSNGQAAK) are compositionally biased toward polar residues. Residues 1–33 (MDIQSNVLTITSGSTPTDTSSNGQAAKSTKERI) form a disordered region. Residues Gln-52, His-156, 201–202 (NE), Tyr-363, Glu-433, Trp-482, 489–490 (EW), and Phe-498 contribute to the a beta-D-glucoside site. The Proton donor role is filled by Glu-202. The active-site Nucleophile is the Glu-433. A required for the homomultimerization region spans residues 502–551 (YVDYANGRYTRLPKRSAVWWRNFLTKPTAVPLKNEPEKSEDRRKRLRGST). The segment at 532–551 (PLKNEPEKSEDRRKRLRGST) is disordered. A compositionally biased stretch (basic and acidic residues) spans 535–544 (NEPEKSEDRR). Residues 542–550 (DRRKRLRGS) carry the Nuclear localization signal motif.

Belongs to the glycosyl hydrolase 1 family. Homomultimer. Native form of the enzyme requires at least an octamer conformation. As to expression, expressed in expanding leaves and in young drupes, mostly in the developing seed coat tissues, the perisperm and the mesocarp. Also detected in shoot and root meristems, flower buds, developing ovaries and tapetal cells of the anther. Not detected in embryos or endosperm, or in leaf trichomes.

Its subcellular location is the nucleus. The catalysed reaction is oleuropein + H2O = oleuropein aglycone + D-glucose. In terms of biological role, major beta-glucosidase activating oleuropein into a potent protein cross-linking agent. No activity with rutin, luteolin or p-nitrophenyl-beta-glucopyranoside as substrates. The chain is Oleuropein beta-glucosidase from Olea europaea (Common olive).